Here is a 222-residue protein sequence, read N- to C-terminus: Ribonuclease T (222 aa).

Positions 20 to 194 (VVIDVETAGF…YDTERTAELF (175 aa)) constitute an Exonuclease domain. Mg(2+) is bound by residues D23, E25, H181, and D186. Residue H181 is the Proton donor/acceptor of the active site.

This sequence belongs to the RNase T family. As to quaternary structure, homodimer. It depends on Mg(2+) as a cofactor.

Trims short 3' overhangs of a variety of RNA species, leaving a one or two nucleotide 3' overhang. Responsible for the end-turnover of tRNA: specifically removes the terminal AMP residue from uncharged tRNA (tRNA-C-C-A). Also appears to be involved in tRNA biosynthesis. The polypeptide is Ribonuclease T (Shewanella sp. (strain MR-4)).